Reading from the N-terminus, the 258-residue chain is Acyl-[acyl-carrier-protein]--UDP-N-acetylglucosamine O-acyltransferase (258 aa).

Belongs to the transferase hexapeptide repeat family. LpxA subfamily. As to quaternary structure, homotrimer.

It is found in the cytoplasm. It carries out the reaction a (3R)-hydroxyacyl-[ACP] + UDP-N-acetyl-alpha-D-glucosamine = a UDP-3-O-[(3R)-3-hydroxyacyl]-N-acetyl-alpha-D-glucosamine + holo-[ACP]. It participates in glycolipid biosynthesis; lipid IV(A) biosynthesis; lipid IV(A) from (3R)-3-hydroxytetradecanoyl-[acyl-carrier-protein] and UDP-N-acetyl-alpha-D-glucosamine: step 1/6. Its function is as follows. Involved in the biosynthesis of lipid A, a phosphorylated glycolipid that anchors the lipopolysaccharide to the outer membrane of the cell. The protein is Acyl-[acyl-carrier-protein]--UDP-N-acetylglucosamine O-acyltransferase of Pseudomonas aeruginosa (strain LESB58).